The chain runs to 196 residues: Dephospho-CoA kinase (196 aa).

The region spanning 5 to 196 is the DPCK domain; the sequence is IIGLTGGIAT…QVDIALNFEL (192 aa). Residue 13–18 coordinates ATP; sequence ATGKTT.

It belongs to the CoaE family.

It is found in the cytoplasm. The catalysed reaction is 3'-dephospho-CoA + ATP = ADP + CoA + H(+). It participates in cofactor biosynthesis; coenzyme A biosynthesis; CoA from (R)-pantothenate: step 5/5. Its function is as follows. Catalyzes the phosphorylation of the 3'-hydroxyl group of dephosphocoenzyme A to form coenzyme A. This Trichormus variabilis (strain ATCC 29413 / PCC 7937) (Anabaena variabilis) protein is Dephospho-CoA kinase.